Consider the following 190-residue polypeptide: Threonylcarbamoyl-AMP synthase (190 aa).

Residues 7 to 190 (TGSIAAAVDL…ALTGELFRQG (184 aa)) form the YrdC-like domain.

The protein belongs to the SUA5 family. TsaC subfamily.

It localises to the cytoplasm. It carries out the reaction L-threonine + hydrogencarbonate + ATP = L-threonylcarbamoyladenylate + diphosphate + H2O. Its function is as follows. Required for the formation of a threonylcarbamoyl group on adenosine at position 37 (t(6)A37) in tRNAs that read codons beginning with adenine. Catalyzes the conversion of L-threonine, HCO(3)(-)/CO(2) and ATP to give threonylcarbamoyl-AMP (TC-AMP) as the acyladenylate intermediate, with the release of diphosphate. The sequence is that of Threonylcarbamoyl-AMP synthase from Salmonella arizonae (strain ATCC BAA-731 / CDC346-86 / RSK2980).